The following is a 378-amino-acid chain: Probable protein phosphatase 2C 55 (378 aa).

Disordered regions lie at residues 1–59 and 79–115; these read MRRH…ASKG and EGEA…GVGC. Over residues 7-26 the composition is skewed to low complexity; it reads LGLLRRAAASSTSAASSRAG. Residues 92 to 104 show a composition bias toward basic residues; sequence GGRRGRNSKRQPP. The PPM-type phosphatase domain maps to 122 to 369; the sequence is SWGYSSFQGR…DNVTCIVLQF (248 aa). Residues aspartate 158, glycine 159, aspartate 321, and aspartate 360 each coordinate Mn(2+).

It belongs to the PP2C family. Mg(2+) is required as a cofactor. Mn(2+) serves as cofactor.

The enzyme catalyses O-phospho-L-seryl-[protein] + H2O = L-seryl-[protein] + phosphate. It catalyses the reaction O-phospho-L-threonyl-[protein] + H2O = L-threonyl-[protein] + phosphate. This Oryza sativa subsp. japonica (Rice) protein is Probable protein phosphatase 2C 55.